Reading from the N-terminus, the 408-residue chain is Peptidase T (408 aa).

Residue His-78 coordinates Zn(2+). Asp-80 is an active-site residue. Asp-141 serves as a coordination point for Zn(2+). Glu-175 functions as the Proton acceptor in the catalytic mechanism. Zn(2+) is bound by residues Glu-176, Asp-198, and His-380.

Belongs to the peptidase M20B family. Requires Zn(2+) as cofactor.

It is found in the cytoplasm. It catalyses the reaction Release of the N-terminal residue from a tripeptide.. Functionally, cleaves the N-terminal amino acid of tripeptides. The polypeptide is Peptidase T (Halothermothrix orenii (strain H 168 / OCM 544 / DSM 9562)).